A 378-amino-acid polypeptide reads, in one-letter code: Chaperone protein DnaJ (378 aa).

One can recognise a J domain in the interval 5-72; it reads DFYEVLGVPK…QKRAAYDQFG (68 aa). The CR-type zinc finger occupies 138–216; that stretch reads GKEAQIRIPS…CHGQGKVKKQ (79 aa). Zn(2+) contacts are provided by Cys-151, Cys-154, Cys-168, Cys-171, Cys-190, Cys-193, Cys-204, and Cys-207. 4 CXXCXGXG motif repeats span residues 151–158, 168–175, 190–197, and 204–211; these read CETCHGSG, CTTCSGTG, CPHCRGTG, and CVTCHGQG. The segment at 354-378 is disordered; sequence SLKKGGGKHSPSGESWTDRLKNLFT. Basic and acidic residues predominate over residues 369-378; that stretch reads WTDRLKNLFT.

It belongs to the DnaJ family. In terms of assembly, homodimer. The cofactor is Zn(2+).

It is found in the cytoplasm. Its function is as follows. Participates actively in the response to hyperosmotic and heat shock by preventing the aggregation of stress-denatured proteins and by disaggregating proteins, also in an autonomous, DnaK-independent fashion. Unfolded proteins bind initially to DnaJ; upon interaction with the DnaJ-bound protein, DnaK hydrolyzes its bound ATP, resulting in the formation of a stable complex. GrpE releases ADP from DnaK; ATP binding to DnaK triggers the release of the substrate protein, thus completing the reaction cycle. Several rounds of ATP-dependent interactions between DnaJ, DnaK and GrpE are required for fully efficient folding. Also involved, together with DnaK and GrpE, in the DNA replication of plasmids through activation of initiation proteins. The sequence is that of Chaperone protein DnaJ from Paracidovorax citrulli (strain AAC00-1) (Acidovorax citrulli).